Reading from the N-terminus, the 257-residue chain is UPF0246 protein Sputcn32_1053 (257 aa).

This sequence belongs to the UPF0246 family.

The chain is UPF0246 protein Sputcn32_1053 from Shewanella putrefaciens (strain CN-32 / ATCC BAA-453).